Here is a 229-residue protein sequence, read N- to C-terminus: Cytidylate kinase (229 aa).

12-20 (GPSGVGKST) contributes to the ATP binding site.

It belongs to the cytidylate kinase family. Type 1 subfamily.

The protein resides in the cytoplasm. It catalyses the reaction CMP + ATP = CDP + ADP. The catalysed reaction is dCMP + ATP = dCDP + ADP. In Mesomycoplasma hyopneumoniae (strain 7448) (Mycoplasma hyopneumoniae), this protein is Cytidylate kinase.